We begin with the raw amino-acid sequence, 245 residues long: uncharacterized protein (245 aa).

The first 20 residues, 1–20 (MIKQTIVALLLSVGASSVFA), serve as a signal peptide directing secretion.

The protein to E.coli YmcB.

This is an uncharacterized protein from Escherichia coli (strain K12).